Consider the following 276-residue polypeptide: Putative pyruvate, phosphate dikinase regulatory protein (276 aa).

153-160 (GISRTSKT) is an ADP binding site.

The protein belongs to the pyruvate, phosphate/water dikinase regulatory protein family. PDRP subfamily.

The catalysed reaction is N(tele)-phospho-L-histidyl/L-threonyl-[pyruvate, phosphate dikinase] + ADP = N(tele)-phospho-L-histidyl/O-phospho-L-threonyl-[pyruvate, phosphate dikinase] + AMP + H(+). It carries out the reaction N(tele)-phospho-L-histidyl/O-phospho-L-threonyl-[pyruvate, phosphate dikinase] + phosphate + H(+) = N(tele)-phospho-L-histidyl/L-threonyl-[pyruvate, phosphate dikinase] + diphosphate. Its function is as follows. Bifunctional serine/threonine kinase and phosphorylase involved in the regulation of the pyruvate, phosphate dikinase (PPDK) by catalyzing its phosphorylation/dephosphorylation. The sequence is that of Putative pyruvate, phosphate dikinase regulatory protein from Brucella anthropi (strain ATCC 49188 / DSM 6882 / CCUG 24695 / JCM 21032 / LMG 3331 / NBRC 15819 / NCTC 12168 / Alc 37) (Ochrobactrum anthropi).